Here is a 562-residue protein sequence, read N- to C-terminus: Putative transport protein YE1478 (562 aa).

Transmembrane regions (helical) follow at residues 8-28, 32-52, 66-86, 94-114, 118-138, and 158-178; these read LLNG…LCLG, LGPI…LLGQ, FMLF…SIFF, MLAL…GKLF, IGLT…LVGA, and NLSL…ILGA. 2 consecutive RCK C-terminal domains span residues 202-288 and 290-373; these read LDTD…SFRN and KEVF…KIGF. 5 helical membrane-spanning segments follow: residues 383 to 403, 406 to 426, 447 to 467, 475 to 495, and 541 to 561; these read LLAF…TFQF, FSFG…LGFL, FGLM…INSS, MLIS…IFGA, and IANV…PGIL.

The protein belongs to the AAE transporter (TC 2.A.81) family. YbjL subfamily.

Its subcellular location is the cell membrane. The sequence is that of Putative transport protein YE1478 from Yersinia enterocolitica serotype O:8 / biotype 1B (strain NCTC 13174 / 8081).